Here is a 325-residue protein sequence, read N- to C-terminus: Inner membrane protein YrbG (325 aa).

Residues 1-5 are Periplasmic-facing; sequence MLLAT. A helical transmembrane segment spans residues 6–26; sequence ALLIVGLLLVVYSADRLVFAA. The Cytoplasmic segment spans residues 27 to 37; it reads SILCRTFGIPP. The chain crosses the membrane as a helical span at residues 38–58; the sequence is LIIGMTVVSIGTSLPEVIVSL. At 59-67 the chain is on the periplasmic side; that stretch reads AASLHEQRD. The chain crosses the membrane as a helical span at residues 68 to 88; the sequence is LAVGTALGSNIINILLILGLA. Over 89–104 the chain is Cytoplasmic; sequence ALVRPFTVHSDVLRRE. The chain crosses the membrane as a helical span at residues 105–125; it reads LPLMLLVSVVAGSVLYDGQLS. A topological domain (periplasmic) is located at residue Arg-126. The chain crosses the membrane as a helical span at residues 127–147; sequence SDGIFLLFLAVLWLLFIVKLA. The Cytoplasmic portion of the chain corresponds to 148 to 169; sequence RQAERQGTDSLTREQLAELPRD. The helical transmembrane segment at 170-190 threads the bilayer; sequence GGLPVAFLWLGIALIIMPVAT. Over 191 to 198 the chain is Periplasmic; the sequence is RMVVDNAT. The chain crosses the membrane as a helical span at residues 199–219; that stretch reads VLANYFAISELTMGLTAIAIG. The Cytoplasmic portion of the chain corresponds to 220–243; sequence TSLPELATAIAGVRKGENDIAVGN. The chain crosses the membrane as a helical span at residues 244–264; the sequence is IIGANIFNIVIVLGLPALITP. The Periplasmic portion of the chain corresponds to 265–269; the sequence is GEIDP. The helical transmembrane segment at 270–290 threads the bilayer; that stretch reads LAYSRDYSVMLLVSIIFALLC. At 291–302 the chain is on the cytoplasmic side; it reads WRRSPQPGRGVG. The helical transmembrane segment at 303-323 threads the bilayer; that stretch reads VLLTGGFIVWLAMLYWLSPIL. Residues 324-325 are Periplasmic-facing; the sequence is VE.

The protein belongs to the Ca(2+):cation antiporter (CaCA) (TC 2.A.19) family.

It is found in the cell inner membrane. The chain is Inner membrane protein YrbG (yrbG) from Escherichia coli (strain K12).